A 303-amino-acid chain; its full sequence is Aspartate carbamoyltransferase catalytic subunit (303 aa).

Residues Arg51 and Thr52 each contribute to the carbamoyl phosphate site. Lys80 contributes to the L-aspartate binding site. Residues Arg101, His129, and Gln132 each contribute to the carbamoyl phosphate site. Residues Arg162 and Arg221 each coordinate L-aspartate. Residues Leu260 and Pro261 each contribute to the carbamoyl phosphate site.

This sequence belongs to the aspartate/ornithine carbamoyltransferase superfamily. ATCase family. In terms of assembly, heterooligomer of catalytic and regulatory chains.

It carries out the reaction carbamoyl phosphate + L-aspartate = N-carbamoyl-L-aspartate + phosphate + H(+). It participates in pyrimidine metabolism; UMP biosynthesis via de novo pathway; (S)-dihydroorotate from bicarbonate: step 2/3. Functionally, catalyzes the condensation of carbamoyl phosphate and aspartate to form carbamoyl aspartate and inorganic phosphate, the committed step in the de novo pyrimidine nucleotide biosynthesis pathway. In Saccharolobus islandicus (strain M.16.27) (Sulfolobus islandicus), this protein is Aspartate carbamoyltransferase catalytic subunit.